The primary structure comprises 53 residues: UPF0391 membrane protein gsr2640 (53 aa).

Helical transmembrane passes span 4 to 24 and 32 to 49; these read LLWLVVVLMVIAALLGFGGVV and WFLIVAAVVLAVVGFVTG.

The protein belongs to the UPF0391 family.

It is found in the cell membrane. The sequence is that of UPF0391 membrane protein gsr2640 from Gloeobacter violaceus (strain ATCC 29082 / PCC 7421).